A 152-amino-acid polypeptide reads, in one-letter code: SsrA-binding protein (152 aa).

The protein belongs to the SmpB family.

The protein localises to the cytoplasm. Functionally, required for rescue of stalled ribosomes mediated by trans-translation. Binds to transfer-messenger RNA (tmRNA), required for stable association of tmRNA with ribosomes. tmRNA and SmpB together mimic tRNA shape, replacing the anticodon stem-loop with SmpB. tmRNA is encoded by the ssrA gene; the 2 termini fold to resemble tRNA(Ala) and it encodes a 'tag peptide', a short internal open reading frame. During trans-translation Ala-aminoacylated tmRNA acts like a tRNA, entering the A-site of stalled ribosomes, displacing the stalled mRNA. The ribosome then switches to translate the ORF on the tmRNA; the nascent peptide is terminated with the 'tag peptide' encoded by the tmRNA and targeted for degradation. The ribosome is freed to recommence translation, which seems to be the essential function of trans-translation. This chain is SsrA-binding protein, found in Rickettsia peacockii (strain Rustic).